Reading from the N-terminus, the 444-residue chain is Tubulin beta-9 chain (444 aa).

Positions 11, 69, 138, 142, 143, 144, 204, and 226 each coordinate GTP. Glu-69 is a Mg(2+) binding site.

It belongs to the tubulin family. As to quaternary structure, dimer of alpha and beta chains. A typical microtubule is a hollow water-filled tube with an outer diameter of 25 nm and an inner diameter of 15 nM. Alpha-beta heterodimers associate head-to-tail to form protofilaments running lengthwise along the microtubule wall with the beta-tubulin subunit facing the microtubule plus end conferring a structural polarity. Microtubules usually have 13 protofilaments but different protofilament numbers can be found in some organisms and specialized cells. Interacts with TFCA. It depends on Mg(2+) as a cofactor.

The protein localises to the cytoplasm. It localises to the cytoskeleton. Its function is as follows. Tubulin is the major constituent of microtubules, a cylinder consisting of laterally associated linear protofilaments composed of alpha- and beta-tubulin heterodimers. Microtubules grow by the addition of GTP-tubulin dimers to the microtubule end, where a stabilizing cap forms. Below the cap, tubulin dimers are in GDP-bound state, owing to GTPase activity of alpha-tubulin. The polypeptide is Tubulin beta-9 chain (TUBB9) (Arabidopsis thaliana (Mouse-ear cress)).